Here is a 153-residue protein sequence, read N- to C-terminus: Nuclear cap-binding protein subunit 2 (153 aa).

Residues Tyr17, Tyr40, 109–113 (RTDWD), 120–124 (RQYGR), and 130–131 (QV) contribute to the mRNA site. An RRM domain is found at 37–115 (CTLYVGNLSF…RIIRTDWDAG (79 aa)).

Belongs to the RRM NCBP2 family. In terms of assembly, component of the nuclear cap-binding complex (CBC), a heterodimer composed of ncbp1/cbp80 and ncbp2/cbp20 that interacts with m7GpppG-capped RNA.

The protein resides in the nucleus. The protein localises to the cytoplasm. Component of the cap-binding complex (CBC), which binds co-transcriptionally to the 5' cap of pre-mRNAs and is involved in various processes such as pre-mRNA splicing, translation regulation, nonsense-mediated mRNA decay, RNA-mediated gene silencing (RNAi) by microRNAs (miRNAs) and mRNA export. The CBC complex is involved in mRNA export from the nucleus, leading to the recruitment of the mRNA export machinery to the 5' end of mRNA and to mRNA export in a 5' to 3' direction through the nuclear pore. The CBC complex is also involved in mediating U snRNA and intronless mRNAs export from the nucleus. The CBC complex is essential for a pioneer round of mRNA translation, before steady state translation when the CBC complex is replaced by cytoplasmic cap-binding protein eIF4E. The pioneer round of mRNA translation mediated by the CBC complex plays a central role in nonsense-mediated mRNA decay (NMD), NMD only taking place in mRNAs bound to the CBC complex, but not on eIF4E-bound mRNAs. The CBC complex enhances NMD in mRNAs containing at least one exon-junction complex (EJC), promoting the interaction between upf1 and upf2. The CBC complex is also involved in 'failsafe' NMD, which is independent of the EJC complex, while it does not participate in Staufen-mediated mRNA decay (SMD). During cell proliferation, the CBC complex is also involved in microRNAs (miRNAs) biogenesis via its interaction with srrt/ars2, thereby being required for miRNA-mediated RNA interference. The CBC complex also acts as a negative regulator of parn, thereby acting as an inhibitor of mRNA deadenylation. In the CBC complex, ncbp2/cbp20 recognizes and binds capped RNAs (m7GpppG-capped RNA) but requires ncbp1/cbp80 to stabilize the movement of its N-terminal loop and lock the CBC into a high affinity cap-binding state with the cap structure. The conventional cap-binding complex with NCBP2 binds both small nuclear RNA (snRNA) and messenger (mRNA) and is involved in their export from the nucleus. This chain is Nuclear cap-binding protein subunit 2 (ncbp2), found in Xenopus tropicalis (Western clawed frog).